The primary structure comprises 443 residues: Probable glycine dehydrogenase (decarboxylating) subunit 1 (443 aa).

The protein belongs to the GcvP family. N-terminal subunit subfamily. As to quaternary structure, the glycine cleavage system is composed of four proteins: P, T, L and H. In this organism, the P 'protein' is a heterodimer of two subunits.

It catalyses the reaction N(6)-[(R)-lipoyl]-L-lysyl-[glycine-cleavage complex H protein] + glycine + H(+) = N(6)-[(R)-S(8)-aminomethyldihydrolipoyl]-L-lysyl-[glycine-cleavage complex H protein] + CO2. The glycine cleavage system catalyzes the degradation of glycine. The P protein binds the alpha-amino group of glycine through its pyridoxal phosphate cofactor; CO(2) is released and the remaining methylamine moiety is then transferred to the lipoamide cofactor of the H protein. The chain is Probable glycine dehydrogenase (decarboxylating) subunit 1 from Chlorobium limicola (strain DSM 245 / NBRC 103803 / 6330).